A 103-amino-acid chain; its full sequence is Small ribosomal subunit protein uS10 (103 aa).

It belongs to the universal ribosomal protein uS10 family. In terms of assembly, part of the 30S ribosomal subunit.

In terms of biological role, involved in the binding of tRNA to the ribosomes. This chain is Small ribosomal subunit protein uS10, found in Shewanella amazonensis (strain ATCC BAA-1098 / SB2B).